A 397-amino-acid polypeptide reads, in one-letter code: Phosphoglycerate kinase (397 aa).

Substrate contacts are provided by residues 21-23, arginine 36, 59-62, arginine 118, and arginine 151; these read DFN and HLGR. Residues lysine 202, glycine 293, glutamate 324, and 353-356 contribute to the ATP site; that span reads GGDS.

The protein belongs to the phosphoglycerate kinase family. As to quaternary structure, monomer.

Its subcellular location is the cytoplasm. It carries out the reaction (2R)-3-phosphoglycerate + ATP = (2R)-3-phospho-glyceroyl phosphate + ADP. The protein operates within carbohydrate degradation; glycolysis; pyruvate from D-glyceraldehyde 3-phosphate: step 2/5. In Chloroherpeton thalassium (strain ATCC 35110 / GB-78), this protein is Phosphoglycerate kinase.